A 75-amino-acid polypeptide reads, in one-letter code: Small ribosomal subunit protein bS18c (75 aa).

The span at 1–12 shows a compositional bias: basic residues; the sequence is MNKSKRSFRRRL. Positions 1-21 are disordered; the sequence is MNKSKRSFRRRLPPIGSRDQI.

The protein belongs to the bacterial ribosomal protein bS18 family. In terms of assembly, part of the 30S ribosomal subunit.

The protein resides in the plastid. It is found in the chloroplast. The sequence is that of Small ribosomal subunit protein bS18c from Cycas taitungensis (Prince sago).